The chain runs to 144 residues: Large ribosomal subunit protein uL13 (144 aa).

The protein belongs to the universal ribosomal protein uL13 family. As to quaternary structure, part of the 50S ribosomal subunit.

This protein is one of the early assembly proteins of the 50S ribosomal subunit, although it is not seen to bind rRNA by itself. It is important during the early stages of 50S assembly. This Moorella thermoacetica (strain ATCC 39073 / JCM 9320) protein is Large ribosomal subunit protein uL13.